Here is a 290-residue protein sequence, read N- to C-terminus: Ribosomal RNA small subunit methyltransferase A (290 aa).

Residues asparagine 27, leucine 29, glycine 54, glutamate 75, aspartate 100, and asparagine 125 each coordinate S-adenosyl-L-methionine.

It belongs to the class I-like SAM-binding methyltransferase superfamily. rRNA adenine N(6)-methyltransferase family. RsmA subfamily.

The protein localises to the cytoplasm. It catalyses the reaction adenosine(1518)/adenosine(1519) in 16S rRNA + 4 S-adenosyl-L-methionine = N(6)-dimethyladenosine(1518)/N(6)-dimethyladenosine(1519) in 16S rRNA + 4 S-adenosyl-L-homocysteine + 4 H(+). In terms of biological role, specifically dimethylates two adjacent adenosines (A1518 and A1519) in the loop of a conserved hairpin near the 3'-end of 16S rRNA in the 30S particle. May play a critical role in biogenesis of 30S subunits. The sequence is that of Ribosomal RNA small subunit methyltransferase A from Streptococcus pneumoniae (strain ATCC BAA-255 / R6).